The primary structure comprises 191 residues: Protein 2 in picA locus (191 aa).

Belongs to the acyltransferase 3 family.

It is found in the cell membrane. Seems to regulate the surface properties of the bacterium in the presence of plant cells or plant cell extracts. The polypeptide is Protein 2 in picA locus (Rhizobium radiobacter (Agrobacterium tumefaciens)).